Reading from the N-terminus, the 715-residue chain is Polyribonucleotide nucleotidyltransferase (715 aa).

Mg(2+)-binding residues include D485 and D491. Residues 552 to 611 form the KH domain; it reads PRIHTMKIDPKKIKDVIGKGGAVIRALTEETGTSIDIDDDGTVKIAATDNNAAKAVMARI. Positions 621-689 constitute an S1 motif domain; sequence NAIYKGKVTR…RQNRIRLTMK (69 aa). The interval 695-715 is disordered; it reads TPVAENVTEEAEVSSEQQAEI.

It belongs to the polyribonucleotide nucleotidyltransferase family. In terms of assembly, component of the RNA degradosome, which is a multiprotein complex involved in RNA processing and mRNA degradation. Requires Mg(2+) as cofactor.

It localises to the cytoplasm. It carries out the reaction RNA(n+1) + phosphate = RNA(n) + a ribonucleoside 5'-diphosphate. Its function is as follows. Involved in mRNA degradation. Catalyzes the phosphorolysis of single-stranded polyribonucleotides processively in the 3'- to 5'-direction. This chain is Polyribonucleotide nucleotidyltransferase, found in Actinobacillus pleuropneumoniae serotype 7 (strain AP76).